A 280-amino-acid polypeptide reads, in one-letter code: Ribosomal RNA small subunit methyltransferase I (280 aa).

The protein belongs to the methyltransferase superfamily. RsmI family.

Its subcellular location is the cytoplasm. The enzyme catalyses cytidine(1402) in 16S rRNA + S-adenosyl-L-methionine = 2'-O-methylcytidine(1402) in 16S rRNA + S-adenosyl-L-homocysteine + H(+). Functionally, catalyzes the 2'-O-methylation of the ribose of cytidine 1402 (C1402) in 16S rRNA. In Rickettsia prowazekii (strain Madrid E), this protein is Ribosomal RNA small subunit methyltransferase I.